The primary structure comprises 537 residues: Zinc finger protein 835 (537 aa).

The segment at 12-109 is disordered; the sequence is AELEGNWKHE…RERGGGPKKP (98 aa). Residues 63-77 are compositionally biased toward polar residues; the sequence is TISSPAATQASVPDD. A compositionally biased stretch (basic and acidic residues) spans 89–104; that stretch reads SPKERHPDSRQRERGG. C2H2-type zinc fingers lie at residues 110 to 132, 138 to 160, 166 to 188, 194 to 216, 222 to 244, 250 to 272, 278 to 300, 306 to 328, 334 to 356, 362 to 384, 390 to 412, 418 to 440, 446 to 468, and 474 to 496; these read WKCG…QRIH, FACP…QRTH, YACH…WRTH, HRCA…RRVH, YACA…QRIH, YECS…QRIH, YRCG…RRVH, YTCQ…RRIH, YACG…QRTH, YPCH…RLVH, YRCL…QKIH, YKCG…QRTH, YTCP…HIVH, and YECS…QRTH. The disordered stretch occupies residues 497-537; that stretch reads ADSSGRLCPAPTPDSTPGLSQGGETCQQGCPGRNPRGPAED. A compositionally biased stretch (polar residues) spans 509–524; it reads PDSTPGLSQGGETCQQ.

The protein belongs to the krueppel C2H2-type zinc-finger protein family.

The protein resides in the nucleus. In terms of biological role, may be involved in transcriptional regulation. This chain is Zinc finger protein 835 (ZNF835), found in Homo sapiens (Human).